Here is a 300-residue protein sequence, read N- to C-terminus: ETS homologous factor (300 aa).

One can recognise a PNT domain in the interval 29-115; it reads PTCNVSSGFF…SNLQHLKWNG (87 aa). The interval 181–203 is disordered; that stretch reads VAESPDMKKEQDHPVKSHTKKHN. Positions 185–195 are enriched in basic and acidic residues; it reads PDMKKEQDHPV. A DNA-binding region (ETS) is located at residues 207–289; it reads THLWEFIRDI…DGRRLVYKFG (83 aa).

Belongs to the ETS family. Highly expressed in kidney and lung, weakly in skeletal muscle, heart, and liver, and not detected in brain, spleen or testis.

The protein resides in the nucleus. Functionally, transcriptional activator that may play a role in regulating epithelial cell differentiation and proliferation. May act as a repressor for a specific subset of ETS/AP-1-responsive genes, and as a modulator of the nuclear response to mitogen-activated protein kinase signaling cascades. Binds to DNA sequences containing the consensus nucleotide core sequence GGAA. Involved in regulation of TNFRSF10B/DR5 expression through Ets-binding sequences on the TNFRSF10B/DR5 promoter. The protein is ETS homologous factor of Mus musculus (Mouse).